Consider the following 530-residue polypeptide: ATP synthase subunit alpha (530 aa).

172 to 179 (GDRQTGKT) lines the ATP pocket.

Belongs to the ATPase alpha/beta chains family. F-type ATPases have 2 components, CF(1) - the catalytic core - and CF(0) - the membrane proton channel. CF(1) has five subunits: alpha(3), beta(3), gamma(1), delta(1), epsilon(1). CF(0) has three main subunits: a(1), b(2) and c(9-12). The alpha and beta chains form an alternating ring which encloses part of the gamma chain. CF(1) is attached to CF(0) by a central stalk formed by the gamma and epsilon chains, while a peripheral stalk is formed by the delta and b chains.

The protein localises to the cell inner membrane. It catalyses the reaction ATP + H2O + 4 H(+)(in) = ADP + phosphate + 5 H(+)(out). In terms of biological role, produces ATP from ADP in the presence of a proton gradient across the membrane. The alpha chain is a regulatory subunit. This chain is ATP synthase subunit alpha, found in Phocaeicola vulgatus (strain ATCC 8482 / DSM 1447 / JCM 5826 / CCUG 4940 / NBRC 14291 / NCTC 11154) (Bacteroides vulgatus).